A 296-amino-acid polypeptide reads, in one-letter code: Enoyl-CoA hydratase ACTT3 (296 aa).

Positions 294–296 (PKL) match the Peroxisomal targeting signal type 1 motif.

The protein belongs to the enoyl-CoA hydratase/isomerase family.

The protein resides in the peroxisome. It catalyses the reaction a (3S)-3-hydroxyacyl-CoA = a (2E)-enoyl-CoA + H2O. The enzyme catalyses a 4-saturated-(3S)-3-hydroxyacyl-CoA = a (3E)-enoyl-CoA + H2O. It participates in mycotoxin biosynthesis. Functionally, enoyl-CoA hydratase; part of the gene clusters that mediate the biosynthesis of the host-selective toxins (HSTs) ACT-toxins responsible for brown spot of tangerine disease by the tangerine pathotype which affects tangerines and mandarins. ACT-toxins consist of three moieties, 9,10-epoxy-8-hydroxy-9-methyl-decatrienoic acid (EDA), valine and a polyketide. ACT-toxin I is toxic to both citrus and pear; toxin II the 5''-deoxy derivative of ACT-toxin I, is highly toxic to pear and slightly toxic to citrus. On cellular level, ACT-toxins affect plasma membrane of susceptible cells and cause a sudden increase in loss of K(+) after a few minutes of toxin treatment. The acyl-CoA ligase ACTT1, the hydrolase ACTT2, the enoyl-CoA hydratases ACTT3 and ACTT6, and the acyl-CoA synthetase ACTT5 are all involved in the biosynthesis of the AK-, AF- and ACT-toxin common 9,10-epoxy-8-hydroxy-9-methyl-decatrienoic acid (EDA) structural moiety. The exact role of each enzyme, and of additional enzymes identified within the AF-toxin clusters have still to be determined. On the other hand, ACTTS1 to ACTTS4 are specific to the tangerine pathotype. The function of ACTTS3 is to elongate the polyketide chain portion of ACT-toxin that is unique to this toxin. The enoyl-reductase ACTTS2 might complement the missing enoyl-reductase (ER) domain in ACTTS3 in the synthesis of the polyketide portion of ACT-toxin. The roles of the nonribosomal peptide synthetases-related proteins ACTTS1 and ACTTS4 have also still not been elucidated. In Alternaria alternata (Alternaria rot fungus), this protein is Enoyl-CoA hydratase ACTT3.